Reading from the N-terminus, the 289-residue chain is Energy-coupling factor transporter ATP-binding protein EcfA2 (289 aa).

The region spanning 3–245 (IEFKNVDYVY…QEWVKKHYLD (243 aa)) is the ABC transporter domain. 40-47 (GHTGSGKS) provides a ligand contact to ATP.

This sequence belongs to the ABC transporter superfamily. Energy-coupling factor EcfA family. Forms a stable energy-coupling factor (ECF) transporter complex composed of 2 membrane-embedded substrate-binding proteins (S component), 2 ATP-binding proteins (A component) and 2 transmembrane proteins (T component).

The protein resides in the cell membrane. ATP-binding (A) component of a common energy-coupling factor (ECF) ABC-transporter complex. Unlike classic ABC transporters this ECF transporter provides the energy necessary to transport a number of different substrates. The polypeptide is Energy-coupling factor transporter ATP-binding protein EcfA2 (Lactobacillus johnsonii (strain CNCM I-12250 / La1 / NCC 533)).